Here is a 1211-residue protein sequence, read N- to C-terminus: Homeodomain-interacting protein kinase 1 (1211 aa).

Residue K25 forms a Glycyl lysine isopeptide (Lys-Gly) (interchain with G-Cter in SUMO); alternate linkage. K25 is covalently cross-linked (Glycyl lysine isopeptide (Lys-Gly) (interchain with G-Cter in SUMO2); alternate). Glycyl lysine isopeptide (Lys-Gly) (interchain with G-Cter in SUMO2) cross-links involve residues K120 and K124. Residues 190-518 form the Protein kinase domain; it reads YEVLEFLGRG…PLKTLNHQFV (329 aa). ATP contacts are provided by residues 196–204 and K219; that span reads LGRGTFGQV. D315 functions as the Proton acceptor in the catalytic mechanism. Residues 835–856 form a disordered region; that stretch reads QQQSSSLPSRKNKQSAPVSSTS. The Nuclear localization signal 1 (NLS1) signature appears at 844-847; the sequence is RKNK. S872 bears the Phosphoserine mark. An interaction with TP53 region spans residues 885–1094; the sequence is PVQDQHQPII…FQHGSPLHST (210 aa). The tract at residues 891 to 998 is required for localization to nuclear speckles; it reads QPIIIPDTPS…PLKTQLGDCT (108 aa). The segment at 902 to 926 is SUMO interaction motifs (SIM); required for nuclear localization and kinase activity; that stretch reads PVSVITIRSDTDEEEDNKFKPSSSS. A Glycyl lysine isopeptide (Lys-Gly) (interchain with G-Cter in SUMO2) cross-link involves residue K991. Disordered stretches follow at residues 1002 to 1023, 1047 to 1070, and 1085 to 1105; these read QASGLLSSSKTKPVASVSGQSS, LSQNQQSSSASTSQERSSNPAPRR, and FQHGSPLHSTGHPHLAPAPAH. 2 stretches are compositionally biased toward low complexity: residues 1048-1064 and 1096-1105; these read SQNQQSSSASTSQERSS and HPHLAPAPAH. A Phosphoserine modification is found at S1201. Residue K1204 forms a Glycyl lysine isopeptide (Lys-Gly) (interchain with G-Cter in SUMO) linkage.

It belongs to the protein kinase superfamily. CMGC Ser/Thr protein kinase family. HIPK subfamily. In terms of assembly, interacts with Nkx1-2, Nkx2-5, MYB, PARK7, DAXX and p53/TP53. Part of a cytoplasmic complex made of HIPK1, DAB2IP and MAP3K5 in response to TNF. This complex formation promotes MAP3K5-JNK activation and subsequent apoptosis. Post-translationally, phosphorylated and activated by JNK1. Autophosphorylated. In terms of processing, sumoylated. When conjugated it is directed to nuclear speckles. SENP1-mediated desumoylation is mediated by TNF in response to stress stimuli, triggering transient translocation from nucleus to cytoplasm.

Its subcellular location is the nucleus. The protein localises to the cytoplasm. The protein resides in the nucleus speckle. The catalysed reaction is L-seryl-[protein] + ATP = O-phospho-L-seryl-[protein] + ADP + H(+). It catalyses the reaction L-threonyl-[protein] + ATP = O-phospho-L-threonyl-[protein] + ADP + H(+). In terms of biological role, serine/threonine-protein kinase involved in transcription regulation and TNF-mediated cellular apoptosis. Plays a role as a corepressor for homeodomain transcription factors. Phosphorylates DAXX and MYB. Phosphorylates DAXX in response to stress, and mediates its translocation from the nucleus to the cytoplasm. Inactivates MYB transcription factor activity by phosphorylation. Prevents MAP3K5-JNK activation in the absence of TNF. TNF triggers its translocation to the cytoplasm in response to stress stimuli, thus activating nuclear MAP3K5-JNK by derepression and promoting apoptosis. May be involved in anti-oxidative stress responses. Involved in the regulation of eye size, lens formation and retinal lamination during late embryogenesis. Promotes angiogenesis and to be involved in erythroid differentiation. May be involved in malignant squamous cell tumor formation. Phosphorylates PAGE4 at 'Thr-51' which is critical for the ability of PAGE4 to potentiate the transcriptional activator activity of JUN. The polypeptide is Homeodomain-interacting protein kinase 1 (Rattus norvegicus (Rat)).